Here is a 459-residue protein sequence, read N- to C-terminus: Sulfite oxidase (459 aa).

Positions 4-83 constitute a Cytochrome b5 heme-binding domain; that stretch reads YPRYTREEVG…LQQYKVGELS (80 aa). Residues His-40, His-65, and His-69 each coordinate heme b. The interval 83-115 is disordered; that stretch reads SPDEAPAAPDAQDPFAGDPPRHPGLRVNSQKPF. Residues 85–100 show a composition bias toward low complexity; that stretch reads DEAPAAPDAQDPFAGD. Positions 86-95 are hinge; it reads EAPAAPDAQD. Positions 96–323 are moco domain; the sequence is PFAGDPPRHP…PSRWQQNDYK (228 aa). Residues 136 to 140, Cys-185, Asp-244, His-283, Arg-288, and 299 to 301 each bind Mo-molybdopterin; these read FTRNH and SVK. The interval 324 to 459 is homodimerization; sequence GFSPCVDWDT…RGVLSTAWHR (136 aa).

Homodimer. Heme b is required as a cofactor. Requires Mo-molybdopterin as cofactor.

The protein resides in the mitochondrion intermembrane space. It catalyses the reaction sulfite + O2 + H2O = sulfate + H2O2. It functions in the pathway energy metabolism; sulfur metabolism. In terms of biological role, catalyzes the oxidation of sulfite to sulfate, the terminal reaction in the oxidative degradation of sulfur-containing amino acids. The chain is Sulfite oxidase (SUOX) from Gallus gallus (Chicken).